Here is a 135-residue protein sequence, read N- to C-terminus: uncharacterized protein (135 aa).

A run of 2 helical transmembrane segments spans residues 20 to 40 (IFSF…NTKL) and 47 to 67 (IAYF…IHGT).

Belongs to the plectrovirus ORF5 family.

It is found in the host membrane. This is an uncharacterized protein from Spiroplasma virus SpV1-C74 (SpV1).